Reading from the N-terminus, the 815-residue chain is Polyribonucleotide nucleotidyltransferase (815 aa).

Residues Asp489 and Asp495 each coordinate Mg(2+). Residues 556-615 (PRFYTLQIPTDKIRDLIGPGGKVIRGIVEATGVKIDVEDSGKVNVASSDQEAAKKALKMI) form the KH domain. Residues 625 to 692 (GKTYLGTVTR…DGNRIKLSRK (68 aa)) form the S1 motif domain. Residues 700–815 (AKMATEGGGD…GGGGGGRGRG (116 aa)) are disordered. Residues 723–734 (APGGVTFEGGYE) are compositionally biased toward gly residues. Acidic residues predominate over residues 735–745 (GGDEPEVEEGE). The segment covering 775–815 (PHGGGGGAGRGGRGRRPGGGGGGGRGGHGGRGGGGGGRGRG) has biased composition (gly residues).

It belongs to the polyribonucleotide nucleotidyltransferase family. Mg(2+) serves as cofactor.

The protein localises to the cytoplasm. It carries out the reaction RNA(n+1) + phosphate = RNA(n) + a ribonucleoside 5'-diphosphate. In terms of biological role, involved in mRNA degradation. Catalyzes the phosphorolysis of single-stranded polyribonucleotides processively in the 3'- to 5'-direction. This chain is Polyribonucleotide nucleotidyltransferase, found in Koribacter versatilis (strain Ellin345).